Here is a 139-residue protein sequence, read N- to C-terminus: Transcription antitermination protein NusB (139 aa).

Belongs to the NusB family.

Functionally, involved in transcription antitermination. Required for transcription of ribosomal RNA (rRNA) genes. Binds specifically to the boxA antiterminator sequence of the ribosomal RNA (rrn) operons. This is Transcription antitermination protein NusB from Rubrobacter xylanophilus (strain DSM 9941 / JCM 11954 / NBRC 16129 / PRD-1).